The chain runs to 487 residues: Glycogen synthase (487 aa).

Position 20 (K20) interacts with ADP-alpha-D-glucose.

Belongs to the glycosyltransferase 1 family. Bacterial/plant glycogen synthase subfamily.

It carries out the reaction [(1-&gt;4)-alpha-D-glucosyl](n) + ADP-alpha-D-glucose = [(1-&gt;4)-alpha-D-glucosyl](n+1) + ADP + H(+). It participates in glycan biosynthesis; glycogen biosynthesis. Functionally, synthesizes alpha-1,4-glucan chains using ADP-glucose. The chain is Glycogen synthase from Aliivibrio fischeri (strain ATCC 700601 / ES114) (Vibrio fischeri).